The sequence spans 258 residues: Small ribosomal subunit protein mS23 (258 aa).

Belongs to the mitochondrion-specific ribosomal protein mS23 family. As to quaternary structure, component of the mitochondrial small ribosomal subunit.

It localises to the mitochondrion. In Aspergillus fumigatus (strain ATCC MYA-4609 / CBS 101355 / FGSC A1100 / Af293) (Neosartorya fumigata), this protein is Small ribosomal subunit protein mS23 (rsm25).